We begin with the raw amino-acid sequence, 430 residues long: Enolase (430 aa).

Gln162 contributes to the (2R)-2-phosphoglycerate binding site. The Proton donor role is filled by Glu204. Mg(2+) contacts are provided by Asp241, Glu283, and Asp310. (2R)-2-phosphoglycerate-binding residues include Lys335, Arg364, Ser365, and Lys386. Lys335 serves as the catalytic Proton acceptor.

It belongs to the enolase family. Mg(2+) is required as a cofactor.

It is found in the cytoplasm. The protein resides in the secreted. Its subcellular location is the cell surface. The catalysed reaction is (2R)-2-phosphoglycerate = phosphoenolpyruvate + H2O. The protein operates within carbohydrate degradation; glycolysis; pyruvate from D-glyceraldehyde 3-phosphate: step 4/5. Its function is as follows. Catalyzes the reversible conversion of 2-phosphoglycerate (2-PG) into phosphoenolpyruvate (PEP). It is essential for the degradation of carbohydrates via glycolysis. The polypeptide is Enolase (Mycobacteroides abscessus (strain ATCC 19977 / DSM 44196 / CCUG 20993 / CIP 104536 / JCM 13569 / NCTC 13031 / TMC 1543 / L948) (Mycobacterium abscessus)).